The following is a 270-amino-acid chain: 5'-AMP-activated protein kinase subunit beta-1 (270 aa).

Positions M1–D43 are disordered. G2 is lipidated: N-myristoyl glycine. Position 4 is a phosphothreonine (T4). 2 positions are modified to phosphoserine: S5 and S6. At T19 the chain carries Phosphothreonine. The segment covering R21–I36 has biased composition (basic and acidic residues). Phosphoserine; by autocatalysis occurs at positions 24 and 25. 4 positions are modified to phosphoserine: S40, S96, S101, and S108. The segment at E68–F163 is glycogen-binding domain. A Phosphothreonine modification is found at T148. S182 is modified (phosphoserine).

Belongs to the 5'-AMP-activated protein kinase beta subunit family. AMPK is a heterotrimer of an alpha catalytic subunit (PRKAA1 or PRKAA2), a beta (PRKAB1 or PRKAB2) and a gamma non-catalytic subunits (PRKAG1, PRKAG2 or PRKAG3). Interacts with FNIP1 and FNIP2. Phosphorylated when associated with the catalytic subunit (PRKAA1 or PRKAA2). Phosphorylated by ULK1; leading to negatively regulate AMPK activity and suggesting the existence of a regulatory feedback loop between ULK1 and AMPK.

Its function is as follows. Non-catalytic subunit of AMP-activated protein kinase (AMPK), an energy sensor protein kinase that plays a key role in regulating cellular energy metabolism. In response to reduction of intracellular ATP levels, AMPK activates energy-producing pathways and inhibits energy-consuming processes: inhibits protein, carbohydrate and lipid biosynthesis, as well as cell growth and proliferation. AMPK acts via direct phosphorylation of metabolic enzymes, and by longer-term effects via phosphorylation of transcription regulators. Also acts as a regulator of cellular polarity by remodeling the actin cytoskeleton; probably by indirectly activating myosin. Beta non-catalytic subunit acts as a scaffold on which the AMPK complex assembles, via its C-terminus that bridges alpha (PRKAA1 or PRKAA2) and gamma subunits (PRKAG1, PRKAG2 or PRKAG3). In Homo sapiens (Human), this protein is 5'-AMP-activated protein kinase subunit beta-1 (PRKAB1).